Here is a 160-residue protein sequence, read N- to C-terminus: Phosphatidylinositol N-acetylglucosaminyltransferase subunit gpi15 (160 aa).

The next 2 membrane-spanning stretches (helical) occupy residues 22–42 and 48–68; these read GTQM…SLAI and IIIT…ISGV.

Belongs to the PIGH family.

It is found in the endoplasmic reticulum membrane. The catalysed reaction is a 1,2-diacyl-sn-glycero-3-phospho-(1D-myo-inositol) + UDP-N-acetyl-alpha-D-glucosamine = a 6-(N-acetyl-alpha-D-glucosaminyl)-1-(1,2-diacyl-sn-glycero-3-phospho)-1D-myo-inositol + UDP + H(+). Its pathway is glycolipid biosynthesis; glycosylphosphatidylinositol-anchor biosynthesis. Its function is as follows. Part of the complex catalyzing the transfer of N-acetylglucosamine from UDP-N-acetylglucosamine to phosphatidylinositol, the first step of GPI biosynthesis. This is Phosphatidylinositol N-acetylglucosaminyltransferase subunit gpi15 (gpi15) from Schizosaccharomyces pombe (strain 972 / ATCC 24843) (Fission yeast).